The chain runs to 577 residues: Arginine--tRNA ligase (577 aa).

The short motif at 122 to 132 (PNVAKEMHVGH) is the 'HIGH' region element.

The protein belongs to the class-I aminoacyl-tRNA synthetase family. In terms of assembly, monomer.

The protein resides in the cytoplasm. It catalyses the reaction tRNA(Arg) + L-arginine + ATP = L-arginyl-tRNA(Arg) + AMP + diphosphate. This is Arginine--tRNA ligase (argS) from Salmonella typhimurium (strain SL1344).